Here is a 367-residue protein sequence, read N- to C-terminus: bZIP transcription factor 18 (367 aa).

The tract at residues 1–57 is disordered; that stretch reads MEDPSNPQPNQSNLSQCPPLATAPTPAPVRGPYHRRAHSEVQFRLPEDLDLSEPFGG. Residues 38–47 show a composition bias toward basic and acidic residues; the sequence is HSEVQFRLPE. At serine 70 the chain carries Phosphoserine. The tract at residues 79-124 is disordered; the sequence is SGSGSASDSAGPSAPRSDNPFSAENGGAEAGNSRPRHRHSLSVDGS. Residues 82–96 show a composition bias toward low complexity; sequence GSASDSAGPSAPRSD. The bZIP domain maps to 148–211; sequence DPKRAKRIIA…TGLSSENTEL (64 aa). Residues 150–171 form a basic motif region; sequence KRAKRIIANRQSAARSKERKAR. Residues 166–245 adopt a coiled-coil conformation; the sequence is KERKARYILE…VERLKFATGE (80 aa). Residues 176–190 are leucine-zipper; the sequence is LERKVQTLQTEATTL. 3 stretches are compositionally biased toward polar residues: residues 294 to 309, 317 to 328, and 354 to 367; these read QPNN…NPPT, ATSNAPAQSHSY, and FGRS…SSTM. Disordered stretches follow at residues 294–330 and 343–367; these read QPNN…SYSE and LDIS…SSTM.

In terms of assembly, interacts with NEAP1. Forms homodimer and heterodimer with bZIP34 and bZIP61. In terms of tissue distribution, ubiquitous. Strongly expressed in mature pollen.

The protein resides in the nucleus. It localises to the nucleoplasm. It is found in the cytoplasm. Its subcellular location is the perinuclear region. Functionally, transcription factor that may participate with bZIP34 in the gametophytic control of pollen development. The chain is bZIP transcription factor 18 from Arabidopsis thaliana (Mouse-ear cress).